The sequence spans 108 residues: Ribonuclease P protein component 4 (108 aa).

Residues Cys-60, Cys-63, Cys-86, and Cys-89 each coordinate Zn(2+).

Belongs to the eukaryotic/archaeal RNase P protein component 4 family. In terms of assembly, consists of a catalytic RNA component and at least 4-5 protein subunits. Zn(2+) is required as a cofactor.

It localises to the cytoplasm. The catalysed reaction is Endonucleolytic cleavage of RNA, removing 5'-extranucleotides from tRNA precursor.. Functionally, part of ribonuclease P, a protein complex that generates mature tRNA molecules by cleaving their 5'-ends. The protein is Ribonuclease P protein component 4 of Sulfurisphaera tokodaii (strain DSM 16993 / JCM 10545 / NBRC 100140 / 7) (Sulfolobus tokodaii).